A 277-amino-acid chain; its full sequence is Coiled-coil domain-containing protein 117 (277 aa).

The segment at 1-69 (MAALGRPFSG…GRVSIHCRKK (69 aa)) is disordered. The span at 26 to 37 (FAGRAFPPGAAG) shows a compositional bias: low complexity. Arg47 is modified (omega-N-methylarginine). A Phosphoserine modification is found at Ser52. Over residues 58–69 (ARGRVSIHCRKK) the composition is skewed to basic residues. The stretch at 139–166 (QCEVARRRLQEIEDRIIDEDEEVESDRN) forms a coiled coil. Residues 212–277 (LPELLPEKPK…ATSTEEEMEL (66 aa)) are disordered.

Interacts with CIAO2B; the interaction is direct. Interacts with MMS19; the interaction is indirect.

The protein localises to the cytoplasm. Its subcellular location is the cytoskeleton. The protein resides in the spindle. It localises to the nucleus. Facilitates DNA repair, cell cycle progression, and cell proliferation through its interaction with CIAO2B. This Mus musculus (Mouse) protein is Coiled-coil domain-containing protein 117.